Reading from the N-terminus, the 814-residue chain is Outer membrane usher protein SefC (814 aa).

The N-terminal stretch at 1 to 30 (MKKTTITLFVLTSVFHSGNVFSRQYNFDYG) is a signal peptide. Cysteines 792 and 813 form a disulfide.

This sequence belongs to the fimbrial export usher family.

The protein localises to the cell outer membrane. Involved in the export and assembly of the SefA fimbrial subunit. The polypeptide is Outer membrane usher protein SefC (sefC) (Salmonella enteritidis).